We begin with the raw amino-acid sequence, 227 residues long: Cytochrome c oxidase subunit 2 (227 aa).

Topologically, residues 1-14 (MAHSFQLGFQDATS) are mitochondrial intermembrane. A helical membrane pass occupies residues 15–45 (PIMEELLHFHDHTLMIVFLISSLVLYIITLM). Residues 46 to 59 (LTTKLTHTSTMDAQ) lie on the Mitochondrial matrix side of the membrane. Residues 60–87 (EVETVWTILPAIILILIALPSLRILYLM) traverse the membrane as a helical segment. The Mitochondrial intermembrane portion of the chain corresponds to 88–227 (DEINTPSLTV…HFENWSTSMI (140 aa)). H161, C196, E198, C200, H204, and M207 together coordinate Cu cation. E198 provides a ligand contact to Mg(2+).

Belongs to the cytochrome c oxidase subunit 2 family. Component of the cytochrome c oxidase (complex IV, CIV), a multisubunit enzyme composed of 14 subunits. The complex is composed of a catalytic core of 3 subunits MT-CO1, MT-CO2 and MT-CO3, encoded in the mitochondrial DNA, and 11 supernumerary subunits COX4I, COX5A, COX5B, COX6A, COX6B, COX6C, COX7A, COX7B, COX7C, COX8 and NDUFA4, which are encoded in the nuclear genome. The complex exists as a monomer or a dimer and forms supercomplexes (SCs) in the inner mitochondrial membrane with NADH-ubiquinone oxidoreductase (complex I, CI) and ubiquinol-cytochrome c oxidoreductase (cytochrome b-c1 complex, complex III, CIII), resulting in different assemblies (supercomplex SCI(1)III(2)IV(1) and megacomplex MCI(2)III(2)IV(2)). Found in a complex with TMEM177, COA6, COX18, COX20, SCO1 and SCO2. Interacts with TMEM177 in a COX20-dependent manner. Interacts with COX20. Interacts with COX16. Cu cation serves as cofactor.

Its subcellular location is the mitochondrion inner membrane. It catalyses the reaction 4 Fe(II)-[cytochrome c] + O2 + 8 H(+)(in) = 4 Fe(III)-[cytochrome c] + 2 H2O + 4 H(+)(out). In terms of biological role, component of the cytochrome c oxidase, the last enzyme in the mitochondrial electron transport chain which drives oxidative phosphorylation. The respiratory chain contains 3 multisubunit complexes succinate dehydrogenase (complex II, CII), ubiquinol-cytochrome c oxidoreductase (cytochrome b-c1 complex, complex III, CIII) and cytochrome c oxidase (complex IV, CIV), that cooperate to transfer electrons derived from NADH and succinate to molecular oxygen, creating an electrochemical gradient over the inner membrane that drives transmembrane transport and the ATP synthase. Cytochrome c oxidase is the component of the respiratory chain that catalyzes the reduction of oxygen to water. Electrons originating from reduced cytochrome c in the intermembrane space (IMS) are transferred via the dinuclear copper A center (CU(A)) of subunit 2 and heme A of subunit 1 to the active site in subunit 1, a binuclear center (BNC) formed by heme A3 and copper B (CU(B)). The BNC reduces molecular oxygen to 2 water molecules using 4 electrons from cytochrome c in the IMS and 4 protons from the mitochondrial matrix. The protein is Cytochrome c oxidase subunit 2 (MT-CO2) of Cephalopachus bancanus (Western tarsier).